A 175-amino-acid polypeptide reads, in one-letter code: MGRTIENKQKIVTEIKSLLDDSEMAVVLDYKGLTIKEMSDLRSRLQTNNGICKVTKNSLMRKAIDGNSNWTDLESLLTGTNAFVLIKEDVGGAVKAIQSFQKETKKSETKGALFEGRLLSESEIKEIASLPSREVLMAKIAGALNGVATKIAISINEVPSGIARSLKQHSEKSES.

The protein belongs to the universal ribosomal protein uL10 family. As to quaternary structure, part of the ribosomal stalk of the 50S ribosomal subunit. The N-terminus interacts with L11 and the large rRNA to form the base of the stalk. The C-terminus forms an elongated spine to which L12 dimers bind in a sequential fashion forming a multimeric L10(L12)X complex.

Functionally, forms part of the ribosomal stalk, playing a central role in the interaction of the ribosome with GTP-bound translation factors. This Prochlorococcus marinus subsp. pastoris (strain CCMP1986 / NIES-2087 / MED4) protein is Large ribosomal subunit protein uL10.